Reading from the N-terminus, the 147-residue chain is Ubiquitin-conjugating enzyme E2 D3 (147 aa).

Residues 1–147 (MALKRINKEL…SREWTQKYAM (147 aa)) form the UBC core domain. C21 and C107 are joined by a disulfide. The active-site Glycyl thioester intermediate is the C85.

Belongs to the ubiquitin-conjugating enzyme family. Interacts with SCF (SKP1-CUL1-F-box protein) E3 ubiquitin ligase complex; when Cullin is neddylated, the interaction between the E2 and the SCF complex is strengthened. Interacts with DAPK3. Interacts with BRCA1; the DNA damage checkpoint promotes the association with BRCA1 after ionizing radiation. Interacts non-covalently with ubiquitin. Interacts with E3 ubiquitin-protein ligase CBLC. Interacts with UBTD1. Interacts with RIGI and RNF135; involved in RIGI ubiquitination and activation. Phosphorylated by AURKB.

The protein localises to the cell membrane. Its subcellular location is the endosome membrane. It carries out the reaction S-ubiquitinyl-[E1 ubiquitin-activating enzyme]-L-cysteine + [E2 ubiquitin-conjugating enzyme]-L-cysteine = [E1 ubiquitin-activating enzyme]-L-cysteine + S-ubiquitinyl-[E2 ubiquitin-conjugating enzyme]-L-cysteine.. It catalyses the reaction S-ubiquitinyl-[E1 ubiquitin-activating enzyme]-L-cysteine + [acceptor protein]-L-lysine = [E1 ubiquitin-activating enzyme]-L-cysteine + N(6)-monoubiquitinyl-[acceptor protein]-L-lysine.. Its pathway is protein modification; protein ubiquitination. Functionally, accepts ubiquitin from the E1 complex and catalyzes its covalent attachment to other proteins. In vitro catalyzes 'Lys-11'-, as well as 'Lys-48'-linked polyubiquitination. Cooperates with the E2 CDC34 and the SCF(FBXW11) E3 ligase complex for the polyubiquitination of NFKBIA leading to its subsequent proteasomal degradation. Acts as an initiator E2, priming the phosphorylated NFKBIA target at positions 'Lys-21' and/or 'Lys-22' with a monoubiquitin. Ubiquitin chain elongation is then performed by CDC34, building ubiquitin chains from the UBE2D3-primed NFKBIA-linked ubiquitin. Also acts as an initiator E2, in conjunction with RNF8, for the priming of PCNA. Monoubiquitination of PCNA, and its subsequent polyubiquitination, are essential events in the operation of the DNA damage tolerance (DDT) pathway that is activated after DNA damage caused by UV or chemical agents during S-phase. Associates with the BRCA1/BARD1 E3 ligase complex to perform ubiquitination at DNA damage sites following ionizing radiation leading to DNA repair. Targets DAPK3 for ubiquitination which influences promyelocytic leukemia protein nuclear body (PML-NB) formation in the nucleus. In conjunction with the MDM2 and TOPORS E3 ligases, functions ubiquitination of p53/TP53. In conjunction with the CBL E3 ligase, targets EGFR for polyubiquitination at the plasma membrane as well as during its internalization and transport on endosomes. In conjunction with the STUB1 E3 quality control E3 ligase, ubiquitinates unfolded proteins to catalyze their immediate destruction. Together with RNF135, catalyzes the viral RNA-dependent 'Lys-63'-linked polyubiquitination of RIGI to activate the downstream signaling pathway that leads to interferon beta production. Together with ZNF598, catalyzes ubiquitination of 40S ribosomal proteins in response to ribosome collisions. In cooperation with the GATOR2 complex, catalyzes 'Lys-6'-linked ubiquitination of NPRL2. The polypeptide is Ubiquitin-conjugating enzyme E2 D3 (UBE2D3) (Bos taurus (Bovine)).